A 376-amino-acid polypeptide reads, in one-letter code: Queuine tRNA-ribosyltransferase (376 aa).

The active-site Proton acceptor is aspartate 89. Substrate contacts are provided by residues 89-93, aspartate 143, glutamine 194, and glycine 221; that span reads DSGGF. Residues 252-258 form an RNA binding region; that stretch reads GVGIPSN. The active-site Nucleophile is the aspartate 271. The interval 276–280 is RNA binding; important for wobble base 34 recognition; it reads ARNGR. The Zn(2+) site is built by cysteine 309, cysteine 311, cysteine 314, and histidine 340.

Belongs to the queuine tRNA-ribosyltransferase family. As to quaternary structure, homodimer. Within each dimer, one monomer is responsible for RNA recognition and catalysis, while the other monomer binds to the replacement base PreQ1. Requires Zn(2+) as cofactor.

The catalysed reaction is 7-aminomethyl-7-carbaguanine + guanosine(34) in tRNA = 7-aminomethyl-7-carbaguanosine(34) in tRNA + guanine. It functions in the pathway tRNA modification; tRNA-queuosine biosynthesis. In terms of biological role, catalyzes the base-exchange of a guanine (G) residue with the queuine precursor 7-aminomethyl-7-deazaguanine (PreQ1) at position 34 (anticodon wobble position) in tRNAs with GU(N) anticodons (tRNA-Asp, -Asn, -His and -Tyr). Catalysis occurs through a double-displacement mechanism. The nucleophile active site attacks the C1' of nucleotide 34 to detach the guanine base from the RNA, forming a covalent enzyme-RNA intermediate. The proton acceptor active site deprotonates the incoming PreQ1, allowing a nucleophilic attack on the C1' of the ribose to form the product. After dissociation, two additional enzymatic reactions on the tRNA convert PreQ1 to queuine (Q), resulting in the hypermodified nucleoside queuosine (7-(((4,5-cis-dihydroxy-2-cyclopenten-1-yl)amino)methyl)-7-deazaguanosine). The chain is Queuine tRNA-ribosyltransferase from Clostridium botulinum (strain Kyoto / Type A2).